Reading from the N-terminus, the 234-residue chain is Opacity protein opA56 (234 aa).

A signal peptide is located at residue alanine 1.

The protein belongs to the opacity porin family.

It is found in the cell outer membrane. Implicated in a number of adherence functions. OPA proteins are implicated in pathogenesis and are subject to phase variation. The sequence is that of Opacity protein opA56 (opaF) from Neisseria gonorrhoeae.